Reading from the N-terminus, the 484-residue chain is Proline--tRNA ligase (484 aa).

The protein belongs to the class-II aminoacyl-tRNA synthetase family. ProS type 3 subfamily. As to quaternary structure, homodimer.

The protein resides in the cytoplasm. It catalyses the reaction tRNA(Pro) + L-proline + ATP = L-prolyl-tRNA(Pro) + AMP + diphosphate. Catalyzes the attachment of proline to tRNA(Pro) in a two-step reaction: proline is first activated by ATP to form Pro-AMP and then transferred to the acceptor end of tRNA(Pro). In Haloarcula marismortui (strain ATCC 43049 / DSM 3752 / JCM 8966 / VKM B-1809) (Halobacterium marismortui), this protein is Proline--tRNA ligase.